Consider the following 107-residue polypeptide: Iron-binding protein IscA (107 aa).

Fe cation is bound by residues C35, C99, and C101.

This sequence belongs to the HesB/IscA family. As to quaternary structure, homodimer; may form tetramers and higher multimers. Requires Fe cation as cofactor.

Is able to transfer iron-sulfur clusters to apo-ferredoxin. Multiple cycles of [2Fe2S] cluster formation and transfer are observed, suggesting that IscA acts catalytically. Recruits intracellular free iron so as to provide iron for the assembly of transient iron-sulfur cluster in IscU in the presence of IscS, L-cysteine and the thioredoxin reductase system TrxA/TrxB. This Serratia proteamaculans (strain 568) protein is Iron-binding protein IscA.